The sequence spans 232 residues: Ubiquinone biosynthesis O-methyltransferase (232 aa).

R36, G55, D76, and M120 together coordinate S-adenosyl-L-methionine.

Belongs to the methyltransferase superfamily. UbiG/COQ3 family.

The catalysed reaction is a 3-demethylubiquinol + S-adenosyl-L-methionine = a ubiquinol + S-adenosyl-L-homocysteine + H(+). It catalyses the reaction a 3-(all-trans-polyprenyl)benzene-1,2-diol + S-adenosyl-L-methionine = a 2-methoxy-6-(all-trans-polyprenyl)phenol + S-adenosyl-L-homocysteine + H(+). Its pathway is cofactor biosynthesis; ubiquinone biosynthesis. O-methyltransferase that catalyzes the 2 O-methylation steps in the ubiquinone biosynthetic pathway. The protein is Ubiquinone biosynthesis O-methyltransferase of Burkholderia orbicola (strain MC0-3).